The primary structure comprises 513 residues: Tyrosine-protein phosphatase non-receptor type substrate 1 (513 aa).

A signal peptide spans 1-31 (MEPAGPAPGRLGPLLLCLLLSASCFCTGATG). One can recognise an Ig-like V-type domain in the interval 32-137 (KELKVTQPEK…SSEPDTEIQS (106 aa)). At 32–373 (KELKVTQPEK…PDNNATHNWN (342 aa)) the chain is on the extracellular side. N54, N92, N168, N180, N205, N209, N246, N271, N293, N302, N312, N320, N345, and N367 each carry an N-linked (GlcNAc...) asparagine glycan. A disulfide bond links C55 and C121. Ig-like C1-type domains follow at residues 149 to 248 (PSPP…ANLS) and 255 to 343 (PTVK…PAIT). A disulfide bond links C171 and C229. An intrachain disulfide couples C274 to C332. A helical transmembrane segment spans residues 374–394 (VFIGVGVACALLVVLLMAALY). The Cytoplasmic segment spans residues 395–511 (LLRIKQKKAK…FSEYASVQVQ (117 aa)). Position 440 is a phosphotyrosine; by Tyr-kinases (Y440). Positions 440–443 (YADL) match the SH2-binding motif. The disordered stretch occupies residues 444–513 (NLPKEKKPAP…EYASVQVQRK (70 aa)). Positions 450-455 (KPAPRA) match the SH3-binding motif. Residues Y464, Y481, and Y505 each carry the phosphotyrosine; by Tyr-kinases modification. 3 short sequence motifs (SH2-binding) span residues 464 to 467 (YASI), 481 to 484 (YADL), and 505 to 508 (YASV). Residues 504-513 (EYASVQVQRK) show a composition bias toward polar residues.

In terms of assembly, binds PTPN11 when tyrosine-phosphorylated, except in macrophages, where it primarily binds PTPN6. Binds GRB2 vitro. Binds FGR. Binds JAK2 irrespective of its phosphorylation status and forms a stable complex. Binds SCAP1 and/or SCAP2. The resulting complex recruits FYB1. Binds PTK2B. Interacts with TRIM2. In terms of processing, N-glycosylated. Phosphorylated on tyrosine residues. As to expression, highly expressed in cerebral cortex, brain, spinal cord, cerebellum and spleen, and at much lower levels in kidney, thymus, heart, lung and liver. Within the cerebellum, highly expressed throughout the molecular layer, and in synaptic glomeruli in the granule cell layer. Detected in neurons of the hippocampus and dentate gyrus, and in olfactory bulb. Not detected in Purkinje cells. Highly expressed in the plexiform layers, optic fiber layer and the outer segments of the photoreceptor layer in the retina. Highly expressed in macrophages. Isoform 3 is detected at very low levels in all tissues tested.

Its subcellular location is the membrane. Its function is as follows. Immunoglobulin-like cell surface receptor for CD47. Acts as a docking protein and induces translocation of PTPN6, PTPN11 and other binding partners from the cytosol to the plasma membrane. Supports adhesion of cerebellar neurons, neurite outgrowth and glial cell attachment. May play a key role in intracellular signaling during synaptogenesis and in synaptic function. Involved in the negative regulation of receptor tyrosine kinase-coupled cellular responses induced by cell adhesion, growth factors or insulin. Mediates negative regulation of phagocytosis, mast cell activation and dendritic cell activation. CD47 binding prevents maturation of immature dendritic cells and inhibits cytokine production by mature dendritic cells. Plays a role in antiviral immunity and limits new world arenavirus infection by decreasing virus internalization. Receptor for THBS1. Interaction with THBS1 stimulates phosphorylation of SIRPA. In response to THBS1, involved in ROS signaling in non-phagocytic cells, stimulating NADPH oxidase-derived ROS production. The chain is Tyrosine-protein phosphatase non-receptor type substrate 1 (Sirpa) from Mus musculus (Mouse).